The following is a 252-amino-acid chain: uncharacterized protein (252 aa).

10 repeat units span residues 68-82 (TYNQ…DLVD), 83-97 (TYNQ…DLVD), 98-112 (TYNQ…DLVD), 113-127 (TYNQ…DLVD), 128-142 (TYNQ…DLVD), 143-157 (TYNQ…DLVD), 158-172 (TYNQ…DLID), 173-187 (TYNQ…DLVD), 188-202 (TYNQ…DLVD), and 203-217 (TYNQ…DLVD). Positions 68–246 (TYNQSQNVCP…LIDTYNQSQN (179 aa)) are 13 X 15 AA tandem repeats. The 11; truncated repeat unit spans residues 218-230 (TYNQSQNVCPQDL). Residues 231–239 (NVYTQDLID) form a 12; truncated repeat. The 13; truncated repeat unit spans residues 240–246 (TYNQSQN).

In terms of biological role, a protein probably derived from this gene is found in cuboidal crystalline inclusions, but is not toxic even when coexpressed with upstream ORF1. The protein runs anomalously as a 50 kDa band in gels. This is an uncharacterized protein from Bacillus thuringiensis subsp. kurstaki.